We begin with the raw amino-acid sequence, 161 residues long: Nucleotide-binding protein Sama_2557 (161 aa).

Belongs to the YajQ family.

Nucleotide-binding protein. This Shewanella amazonensis (strain ATCC BAA-1098 / SB2B) protein is Nucleotide-binding protein Sama_2557.